Here is a 341-residue protein sequence, read N- to C-terminus: Ketol-acid reductoisomerase (NADP(+)) (341 aa).

The region spanning Ala-2–Thr-181 is the KARI N-terminal Rossmann domain. Residues Tyr-25–Gln-28, Arg-48, Ser-52, and Asp-82–Gln-85 each bind NADP(+). The active site involves His-107. Gly-133 is a binding site for NADP(+). In terms of domain architecture, KARI C-terminal knotted spans Thr-182–Val-327. Mg(2+) is bound by residues Asp-190, Glu-194, Glu-226, and Glu-230. Ser-251 contacts substrate.

This sequence belongs to the ketol-acid reductoisomerase family. Mg(2+) serves as cofactor.

It carries out the reaction (2R)-2,3-dihydroxy-3-methylbutanoate + NADP(+) = (2S)-2-acetolactate + NADPH + H(+). It catalyses the reaction (2R,3R)-2,3-dihydroxy-3-methylpentanoate + NADP(+) = (S)-2-ethyl-2-hydroxy-3-oxobutanoate + NADPH + H(+). It participates in amino-acid biosynthesis; L-isoleucine biosynthesis; L-isoleucine from 2-oxobutanoate: step 2/4. The protein operates within amino-acid biosynthesis; L-valine biosynthesis; L-valine from pyruvate: step 2/4. In terms of biological role, involved in the biosynthesis of branched-chain amino acids (BCAA). Catalyzes an alkyl-migration followed by a ketol-acid reduction of (S)-2-acetolactate (S2AL) to yield (R)-2,3-dihydroxy-isovalerate. In the isomerase reaction, S2AL is rearranged via a Mg-dependent methyl migration to produce 3-hydroxy-3-methyl-2-ketobutyrate (HMKB). In the reductase reaction, this 2-ketoacid undergoes a metal-dependent reduction by NADPH to yield (R)-2,3-dihydroxy-isovalerate. The chain is Ketol-acid reductoisomerase (NADP(+)) from Geobacillus kaustophilus (strain HTA426).